A 175-amino-acid polypeptide reads, in one-letter code: NADH-ubiquinone oxidoreductase chain 6 (175 aa).

Helical transmembrane passes span 1-21 (MMTY…VGFS), 25-45 (SPIY…GIVL), 47-67 (FGGS…MLVV), 88-108 (AVLG…CYIL), and 149-169 (YGTW…LVIM).

This sequence belongs to the complex I subunit 6 family. In terms of assembly, core subunit of respiratory chain NADH dehydrogenase (Complex I) which is composed of 45 different subunits.

Its subcellular location is the mitochondrion inner membrane. The enzyme catalyses a ubiquinone + NADH + 5 H(+)(in) = a ubiquinol + NAD(+) + 4 H(+)(out). Functionally, core subunit of the mitochondrial membrane respiratory chain NADH dehydrogenase (Complex I) which catalyzes electron transfer from NADH through the respiratory chain, using ubiquinone as an electron acceptor. Essential for the catalytic activity and assembly of complex I. This is NADH-ubiquinone oxidoreductase chain 6 (MT-ND6) from Phoca vitulina (Harbor seal).